Reading from the N-terminus, the 361-residue chain is Dual specificity mitogen-activated protein kinase kinase 6 (361 aa).

2 stretches are compositionally biased toward basic and acidic residues: residues 1-11 (MEGGSDKESKV) and 37-48 (PKELKLPKEVFE). Residues 1–61 (MEGGSDKESK…PAPTPPRDLD (61 aa)) form a disordered region. A d domain region spans residues 30–46 (VRGKKKLPKELKLPKEV). A Protein kinase domain is found at 80–341 (LEQIGELGRG…YTELMQHPFF (262 aa)). Residues 86-94 (LGRGAYGVV) and K109 each bind ATP. Catalysis depends on D206, which acts as the Proton acceptor. The residue at position 234 (S234) is a Phosphoserine; by MAPK3. T238 is modified (phosphothreonine; by MAPK3). The segment at 338 to 361 (HPFFTLHDSKDTDVASFVKTILGD) is DVD domain.

It belongs to the protein kinase superfamily. STE Ser/Thr protein kinase family. MAP kinase kinase subfamily. In terms of assembly, dimer. Interacts (via its D domain) with its MAP kinase substrates. Interacts (via its DVD domain) with MAP3Ks activators. Post-translationally, weakly autophosphorylated. Phosphorylated at Ser-234 and Thr-238 by the majority of M3Ks.

Its subcellular location is the nucleus. The protein localises to the cytoplasm. It is found in the cytoskeleton. The catalysed reaction is L-seryl-[protein] + ATP = O-phospho-L-seryl-[protein] + ADP + H(+). It catalyses the reaction L-threonyl-[protein] + ATP = O-phospho-L-threonyl-[protein] + ADP + H(+). The enzyme catalyses L-tyrosyl-[protein] + ATP = O-phospho-L-tyrosyl-[protein] + ADP + H(+). Activated by dual phosphorylation on Ser-234 and Thr-238 in response to a variety of cellular stresses, including UV radiation, osmotic shock, hypoxia, inflammatory cytokines, interferon gamma (IFNG), and less often by growth factors. MAP2K6/MKK6 is activated by the majority of M3Ks. Dual specificity protein kinase which acts as an essential component of the MAP kinase signal transduction pathway. Catalyzes the concomitant phosphorylation of a threonine and a tyrosine residue in the MAP kinases p38 and plays an important role in the regulation of cellular responses to cytokines and all kinds of stresses. The p38 MAP kinase signal transduction pathway leads to direct activation of transcription factors. Phosphorylation by MAP2K6 asymmetrically activates p38 on one side of the blastodisc, an event which is necessary for blastomere cleavage. This is Dual specificity mitogen-activated protein kinase kinase 6 from Danio rerio (Zebrafish).